The chain runs to 441 residues: MVGAKPVENGSDGGSSTGLLHGRYELGRLLGHGTFAKVYHARNIQTGKSVAMKVVGKEKVVKVGMVDQIKREISVMRMVKHPNIVELHEVMASKSKIYFAMELVRGGELFAKVAKGRLREDVARVYFQQLISAVDFCHSRGVYHRDLKPENLLLDEEGNLKVTDFGLSAFTEHLKQDGLLHTTCGTPAYVAPEVILKKGYDGAKADLWSCGVILFVLLAGYLPFQDDNLVNMYRKIYRGDFKCPGWLSSDARRLVTKLLDPNPNTRITIEKVMDSPWFKKQATRSRNEPVAATITTTEEDVDFLVHKSKEETETLNAFHIIALSEGFDLSPLFEEKKKEEKREMRFATSRPASSVISSLEEAARVGNKFDVRKSESRVRIEGKQNGRKGKLAVEAEIFAVAPSFVVVEVKKDHGDTLEYNNFCSTALRPALKDIFWTSTPA.

Positions 24–278 constitute a Protein kinase domain; sequence YELGRLLGHG…IEKVMDSPWF (255 aa). ATP-binding positions include 30–38 and lysine 53; that span reads LGHGTFAKV. Aspartate 146 functions as the Proton acceptor in the catalytic mechanism. The tract at residues 164–193 is activation loop; the sequence is DFGLSAFTEHLKQDGLLHTTCGTPAYVAPE. Serine 168 carries the phosphoserine modification. Threonine 182 bears the Phosphothreonine mark. In terms of domain architecture, NAF spans 310–334; it reads EETETLNAFHIIALSEGFDLSPLFE. A PPI region spans residues 341–371; the sequence is KREMRFATSRPASSVISSLEEAARVGNKFDV.

This sequence belongs to the protein kinase superfamily. CAMK Ser/Thr protein kinase family. SNF1 subfamily. As to quaternary structure, part of a K(+)-channel calcium-sensing kinase/phosphatase complex composed by a calcium sensor CBL (CBL1, CBL2, CBL3 or CBL9), a kinase CIPK (CIPK6, CIPK16 or CIPK23), a phosphatase PP2C (AIP1) and a K(+)-channel (AKT1). Interacts with AKT1, AKT2,CBL1, CBL2, CBL3, CBL4/SOS3 and CBL9. Mn(2+) is required as a cofactor. Post-translationally, autophosphorylated. In terms of tissue distribution, expressed in roots and shoots.

The protein resides in the endoplasmic reticulum. It carries out the reaction L-seryl-[protein] + ATP = O-phospho-L-seryl-[protein] + ADP + H(+). The enzyme catalyses L-threonyl-[protein] + ATP = O-phospho-L-threonyl-[protein] + ADP + H(+). In terms of biological role, CIPK serine-threonine protein kinases interact with CBL proteins. Binding of a CBL protein to the regulatory NAF domain of CIPK protein lead to the activation of the kinase in a calcium-dependent manner. Downstream of CBL1, CBL2, CBL3 and CBL9, regulates by phosphorylation the K(+) conductance and uptake of AKT1. Binds to CBL4 to modulate AKT2 activity by promoting a kinase interaction-dependent but phosphorylation-independent translocation of the channel to the plasma membrane. This chain is CBL-interacting serine/threonine-protein kinase 6 (CIPK6), found in Arabidopsis thaliana (Mouse-ear cress).